A 209-amino-acid chain; its full sequence is GTP-binding nuclear protein Ran1B (209 aa).

The 162-residue stretch at 1-162 (NFKLVIVGDG…LYLARKLAGD (162 aa)) folds into the Small GTPase Ran-type domain. 9-16 (DGGTGKTT) serves as a coordination point for GTP. The segment at 28–36 (KKYEPTIGV) is switch-I. GTP contacts are provided by residues Gly-59, 113-116 (NKVD), and 141-143 (SAK). The tract at residues 59-75 (GQEKFGGLRDGYYIHGQ) is switch-II. Positions 187–200 (QHEAELAAAASQPL) are enriched in low complexity. The disordered stretch occupies residues 187–209 (QHEAELAAAASQPLPDDDDDAFD).

This sequence belongs to the small GTPase superfamily. Ran family. In terms of assembly, found in a nuclear export complex with RanGTP, exportin and pre-miRNA.

Its subcellular location is the nucleus. Functionally, GTP-binding protein involved in nucleocytoplasmic transport. Required for the import of protein into the nucleus and also for RNA export. Involved in chromatin condensation and control of cell cycle. In Lotus japonicus (Lotus corniculatus var. japonicus), this protein is GTP-binding nuclear protein Ran1B (RAN1B).